A 247-amino-acid chain; its full sequence is ATP synthase subunit a, chloroplastic (247 aa).

5 helical membrane passes run 38–58 (QVLI…IVTV), 95–115 (VPFI…GALL), 134–154 (INTT…AGLS), 199–219 (LVVV…VMFL), and 220–240 (GLFT…AYIG).

The protein belongs to the ATPase A chain family. As to quaternary structure, F-type ATPases have 2 components, CF(1) - the catalytic core - and CF(0) - the membrane proton channel. CF(1) has five subunits: alpha(3), beta(3), gamma(1), delta(1), epsilon(1). CF(0) has four main subunits: a, b, b' and c.

It is found in the plastid. The protein localises to the chloroplast thylakoid membrane. Key component of the proton channel; it plays a direct role in the translocation of protons across the membrane. The sequence is that of ATP synthase subunit a, chloroplastic from Populus trichocarpa (Western balsam poplar).